We begin with the raw amino-acid sequence, 316 residues long: MAPRCLLIGTPSIAAHPERLDQVYEIHHRSSTDLQMLDRIAAGLVNLPAATYDVVLLLADADGTTRESHKLFSRDVMNKVASALKIGGVLKSQAGPFQGAEKTEAILAGLTETEDGMAKPEQEEPVSIPLKFGKNKANGVSATNGTNGAVNPDGSVPLNLNRKRDQPEPVKPAGVGFVDFSDDLDDPIITGEDDDLIDEDDLITEADMARPVVQPLECQPKPGKRRRACKDCTCGMKEKLEAEDAAKRSSADKALNSLKLDADDLAEVDFTVQGKVGSCGNCALGDAFRCDGCPYIGLPAFKPGEEVRLLNNDIQL.

An N-terminal SAM-like domain region spans residues 1-128 (MAPRCLLIGT…KPEQEEPVSI (128 aa)). Residues 129–208 (PLKFGKNKAN…EDDLITEADM (80 aa)) form a linker region. A disordered region spans residues 141-177 (SATNGTNGAVNPDGSVPLNLNRKRDQPEPVKPAGVGF). [2Fe-2S] cluster contacts are provided by Cys-218, Cys-229, Cys-232, and Cys-234. Positions 218–234 (CQPKPGKRRRACKDCTC) are fe-S binding site A. 4 residues coordinate [4Fe-4S] cluster: Cys-279, Cys-282, Cys-290, and Cys-293. 2 short sequence motifs (cx2C motif) span residues 279–282 (CGNC) and 290–293 (CDGC). The tract at residues 279-293 (CGNCALGDAFRCDGC) is fe-S binding site B.

It belongs to the anamorsin family. Monomer. Interacts with TAH18. Interacts with MIA40. Requires [2Fe-2S] cluster as cofactor. The cofactor is [4Fe-4S] cluster.

The protein resides in the cytoplasm. It is found in the mitochondrion intermembrane space. In terms of biological role, component of the cytosolic iron-sulfur (Fe-S) protein assembly (CIA) machinery required for the maturation of extramitochondrial Fe-S proteins. Part of an electron transfer chain functioning in an early step of cytosolic Fe-S biogenesis, facilitating the de novo assembly of a [4Fe-4S] cluster on the scaffold complex CFD1-NBP35. Electrons are transferred to DRE2 from NADPH via the FAD- and FMN-containing protein TAH18. TAH18-DRE2 are also required for the assembly of the diferric tyrosyl radical cofactor of ribonucleotide reductase (RNR), probably by providing electrons for reduction during radical cofactor maturation in the catalytic small subunit RNR2. This is Fe-S cluster assembly protein dre2 from Pyrenophora tritici-repentis (strain Pt-1C-BFP) (Wheat tan spot fungus).